The primary structure comprises 195 residues: Imidazoleglycerol-phosphate dehydratase (195 aa).

This sequence belongs to the imidazoleglycerol-phosphate dehydratase family.

It localises to the cytoplasm. It carries out the reaction D-erythro-1-(imidazol-4-yl)glycerol 3-phosphate = 3-(imidazol-4-yl)-2-oxopropyl phosphate + H2O. Its pathway is amino-acid biosynthesis; L-histidine biosynthesis; L-histidine from 5-phospho-alpha-D-ribose 1-diphosphate: step 6/9. This Methylorubrum populi (strain ATCC BAA-705 / NCIMB 13946 / BJ001) (Methylobacterium populi) protein is Imidazoleglycerol-phosphate dehydratase.